A 394-amino-acid polypeptide reads, in one-letter code: Elongation factor Tu (394 aa).

The region spanning 10–204 is the tr-type G domain; the sequence is KPHVNVGTIG…ALDRYIPTPE (195 aa). Positions 19 to 26 are G1; the sequence is GHVDHGKT. 19–26 provides a ligand contact to GTP; sequence GHVDHGKT. Thr26 lines the Mg(2+) pocket. Residues 60–64 are G2; that stretch reads GITIN. Residues 81–84 are G3; sequence DCPG. GTP-binding positions include 81-85 and 136-139; these read DCPGH and NKCD. The G4 stretch occupies residues 136-139; that stretch reads NKCD. Residues 174–176 are G5; sequence SAL.

Belongs to the TRAFAC class translation factor GTPase superfamily. Classic translation factor GTPase family. EF-Tu/EF-1A subfamily. In terms of assembly, monomer.

It is found in the cytoplasm. The enzyme catalyses GTP + H2O = GDP + phosphate + H(+). GTP hydrolase that promotes the GTP-dependent binding of aminoacyl-tRNA to the A-site of ribosomes during protein biosynthesis. The chain is Elongation factor Tu from Neisseria gonorrhoeae.